The primary structure comprises 87 residues: Beta-toxin Ct17 (87 aa).

The signal sequence occupies residues 1 to 19; sequence MNSLLMITACLVLIGTVWA. The 66-residue stretch at 20–85 folds into the LCN-type CS-alpha/beta domain; the sequence is KKDGYLVDKT…TWPLPNKRCG (66 aa). Intrachain disulfides connect Cys-31–Cys-84, Cys-35–Cys-60, Cys-44–Cys-65, and Cys-48–Cys-67. At Cys-84 the chain carries Cysteine amide.

This sequence belongs to the long (4 C-C) scorpion toxin superfamily. Sodium channel inhibitor family. Beta subfamily. Expressed by the venom gland.

It localises to the secreted. Beta toxins bind voltage-independently at site-4 of sodium channels (Nav) and shift the voltage of activation toward more negative potentials thereby affecting sodium channel activation and promoting spontaneous and repetitive firing. Is possibly lethal to mice, freshwater shrimp and crickets. This is Beta-toxin Ct17 from Centruroides tecomanus (Scorpion).